Reading from the N-terminus, the 87-residue chain is Small ribosomal subunit protein bS18 (87 aa).

It belongs to the bacterial ribosomal protein bS18 family. Part of the 30S ribosomal subunit. Forms a tight heterodimer with protein bS6.

Binds as a heterodimer with protein bS6 to the central domain of the 16S rRNA, where it helps stabilize the platform of the 30S subunit. This is Small ribosomal subunit protein bS18 from Sulfurimonas denitrificans (strain ATCC 33889 / DSM 1251) (Thiomicrospira denitrificans (strain ATCC 33889 / DSM 1251)).